The chain runs to 452 residues: MKMERKNVWQHRNREEIESFSKEYMDFMGRAKTERLAVREIRKFLEKEGFVPIEDFAGDPMDMAVYAVNRGKAIAAFRVVDDLKKGLNLVVAHIDSPRLDFKPNPLVEDEQIALFKTHYYGGIKKYHWFNIPLEIHGVLFRGDGEEIEIHVGDKPEDPVFTIPDLLPHLDKEDAKISEKFKGENLMLIAGTIPLSGEEKEAVKMNVLKILNEMYGISEEDFVSGEIEVVPAFPPREVGIDRSLIGAYGQDDRICAYTALRAFLEANPKKSIGVVFLDKEEIGSDGNTGAKARFYLRVLRQILKIQGGPEIQNSHSMRYWKKSAVISGDVCAAVNPPYKDVHDLHNAPRSGYGVALVKYTGARGKYSTNDAHAEFVARVRQVLNERNVIWQVATLGKVDQGGGGTYAKFFAERGADVYDMGPALLGMHSPFEISSKADLFETYRAYRALLEDL.

Zn(2+)-binding residues include H93, H168, and H427.

It belongs to the peptidase M18 family. Zn(2+) serves as cofactor.

The sequence is that of Probable M18 family aminopeptidase 1 (apeA) from Thermotoga neapolitana.